Here is a 108-residue protein sequence, read N- to C-terminus: Integration host factor subunit alpha (108 aa).

It belongs to the bacterial histone-like protein family. In terms of assembly, heterodimer of an alpha and a beta chain.

This protein is one of the two subunits of integration host factor, a specific DNA-binding protein that functions in genetic recombination as well as in transcriptional and translational control. In Bartonella henselae (strain ATCC 49882 / DSM 28221 / CCUG 30454 / Houston 1) (Rochalimaea henselae), this protein is Integration host factor subunit alpha.